Here is a 345-residue protein sequence, read N- to C-terminus: Methylthioribose-1-phosphate isomerase (345 aa).

Residues 44–46, Arg86, and Gln194 contribute to the substrate site; that span reads RGA. Asp235 functions as the Proton donor in the catalytic mechanism. 245–246 lines the substrate pocket; that stretch reads NK.

It belongs to the eIF-2B alpha/beta/delta subunits family. MtnA subfamily.

It catalyses the reaction 5-(methylsulfanyl)-alpha-D-ribose 1-phosphate = 5-(methylsulfanyl)-D-ribulose 1-phosphate. The protein operates within amino-acid biosynthesis; L-methionine biosynthesis via salvage pathway; L-methionine from S-methyl-5-thio-alpha-D-ribose 1-phosphate: step 1/6. Catalyzes the interconversion of methylthioribose-1-phosphate (MTR-1-P) into methylthioribulose-1-phosphate (MTRu-1-P). The protein is Methylthioribose-1-phosphate isomerase of Desulfitobacterium hafniense (strain DSM 10664 / DCB-2).